The following is a 311-amino-acid chain: DNA replication terminus site-binding protein (311 aa).

Belongs to the Tus family.

The protein localises to the cytoplasm. Trans-acting protein required for termination of DNA replication. Binds to DNA replication terminator sequences (terA to terF) to prevent the passage of replication forks. The termination efficiency will be affected by the affinity of this protein for the terminator sequence. The chain is DNA replication terminus site-binding protein from Yersinia pseudotuberculosis serotype O:1b (strain IP 31758).